The following is a 390-amino-acid chain: GTPase Obg (390 aa).

The Obg domain maps to 1 to 159 (MKFIDESLIR…RDLLLELMLL (159 aa)). The OBG-type G domain maps to 160-333 (ADVGMLGLPN…LCRDIMDFII (174 aa)). GTP contacts are provided by residues 166-173 (GLPNAGKS), 191-195 (FTTLV), 213-216 (DIPG), 283-286 (NKID), and 314-316 (SAA). Mg(2+) is bound by residues Ser-173 and Thr-193. The disordered stretch occupies residues 363-382 (EHQFDDDEDWDDDWSEEDDE). Positions 366–382 (FDDDEDWDDDWSEEDDE) are enriched in acidic residues.

Belongs to the TRAFAC class OBG-HflX-like GTPase superfamily. OBG GTPase family. In terms of assembly, monomer. Mg(2+) serves as cofactor.

The protein resides in the cytoplasm. In terms of biological role, an essential GTPase which binds GTP, GDP and possibly (p)ppGpp with moderate affinity, with high nucleotide exchange rates and a fairly low GTP hydrolysis rate. Plays a role in control of the cell cycle, stress response, ribosome biogenesis and in those bacteria that undergo differentiation, in morphogenesis control. The polypeptide is GTPase Obg (Haemophilus influenzae (strain ATCC 51907 / DSM 11121 / KW20 / Rd)).